A 460-amino-acid chain; its full sequence is tRNA-2-methylthio-N(6)-dimethylallyladenosine synthase (460 aa).

Positions 10-126 (GSYWITTFGC…LEVLLNRVDS (117 aa)) constitute an MTTase N-terminal domain. [4Fe-4S] cluster is bound by residues Cys19, Cys55, Cys89, Cys161, Cys165, and Cys168. Residues 147–384 (RDSSICGWVN…NALVERCARE (238 aa)) enclose the Radical SAM core domain. Residues 387–455 (ARYAGRTEEV…SFSLSGTPLP (69 aa)) enclose the TRAM domain.

The protein belongs to the methylthiotransferase family. MiaB subfamily. As to quaternary structure, monomer. It depends on [4Fe-4S] cluster as a cofactor.

Its subcellular location is the cytoplasm. The catalysed reaction is N(6)-dimethylallyladenosine(37) in tRNA + (sulfur carrier)-SH + AH2 + 2 S-adenosyl-L-methionine = 2-methylsulfanyl-N(6)-dimethylallyladenosine(37) in tRNA + (sulfur carrier)-H + 5'-deoxyadenosine + L-methionine + A + S-adenosyl-L-homocysteine + 2 H(+). Its function is as follows. Catalyzes the methylthiolation of N6-(dimethylallyl)adenosine (i(6)A), leading to the formation of 2-methylthio-N6-(dimethylallyl)adenosine (ms(2)i(6)A) at position 37 in tRNAs that read codons beginning with uridine. This Parasynechococcus marenigrum (strain WH8102) protein is tRNA-2-methylthio-N(6)-dimethylallyladenosine synthase.